Here is a 151-residue protein sequence, read N- to C-terminus: Phosphopantetheine adenylyltransferase (151 aa).

Thr9 contributes to the substrate binding site. Residues 9–10 (TF) and His17 each bind ATP. Lys41, Thr73, and Arg87 together coordinate substrate. Residues 88-90 (GIR), Glu98, and 122-128 (LTSISST) contribute to the ATP site.

Belongs to the bacterial CoaD family. Homohexamer. It depends on Mg(2+) as a cofactor.

The protein resides in the cytoplasm. It catalyses the reaction (R)-4'-phosphopantetheine + ATP + H(+) = 3'-dephospho-CoA + diphosphate. Its pathway is cofactor biosynthesis; coenzyme A biosynthesis; CoA from (R)-pantothenate: step 4/5. Its function is as follows. Reversibly transfers an adenylyl group from ATP to 4'-phosphopantetheine, yielding dephospho-CoA (dPCoA) and pyrophosphate. The sequence is that of Phosphopantetheine adenylyltransferase from Phocaeicola vulgatus (strain ATCC 8482 / DSM 1447 / JCM 5826 / CCUG 4940 / NBRC 14291 / NCTC 11154) (Bacteroides vulgatus).